Here is a 149-residue protein sequence, read N- to C-terminus: Transcriptional regulator MraZ (149 aa).

SpoVT-AbrB domains are found at residues 6–52 (RSYR…TPED) and 81–124 (VEEL…SEEE).

This sequence belongs to the MraZ family. In terms of assembly, forms oligomers.

It is found in the cytoplasm. The protein localises to the nucleoid. The polypeptide is Transcriptional regulator MraZ (Oleidesulfovibrio alaskensis (strain ATCC BAA-1058 / DSM 17464 / G20) (Desulfovibrio alaskensis)).